Reading from the N-terminus, the 313-residue chain is MPIKLPDTLPAYDILSREGVMVMPEDGAAKQDIRPLRIGLLNLMPKKIQTETQFARLIGASPLQIELSLIRMSDHESKNTSAAHMDEFYRTFSEVQATGEKFDGLLITGAPIEHLPFEDVTYWDELIQVMDWTQTNVHSTFGICWGGMAMAYHFHGIKKHMLDAKAFGCFRHVNQAPASPYLRGFSDDVLMPVSRWTEVRSDEIAAAGLSTLIGSDDVGPALVEDADHRALYVFNHFEYDSETLKQEYDRDADAGAPINVPVNYYPGDDPTATPMNRWRSHAHLLYGNWVSELYLTTPYDIEQIGLASTDLRK.

Catalysis depends on Cys144, which acts as the Acyl-thioester intermediate. Substrate is bound by residues Lys165 and Ser194. His236 functions as the Proton acceptor in the catalytic mechanism. The active site involves Glu238. Arg250 provides a ligand contact to substrate.

The protein belongs to the MetA family.

Its subcellular location is the cytoplasm. It carries out the reaction L-homoserine + acetyl-CoA = O-acetyl-L-homoserine + CoA. The protein operates within amino-acid biosynthesis; L-methionine biosynthesis via de novo pathway; O-acetyl-L-homoserine from L-homoserine: step 1/1. Transfers an acetyl group from acetyl-CoA to L-homoserine, forming acetyl-L-homoserine. This Jannaschia sp. (strain CCS1) protein is Homoserine O-acetyltransferase.